The sequence spans 133 residues: Interleukin-4 (133 aa).

Positions 1–24 (MGLTSQLIPMLVCLLACTSNFVHG) are cleaved as a signal peptide. 3 disulfide bridges follow: C27/C133, C48/C85, and C70/C105. N-linked (GlcNAc...) asparagine glycans are attached at residues N62, N96, and N102.

The protein belongs to the IL-4/IL-13 family.

Its subcellular location is the secreted. In terms of biological role, participates in at least several B-cell activation processes as well as of other cell types. It is a costimulator of DNA-synthesis. It induces the expression of class II MHC molecules on resting B-cells. It enhances both secretion and cell surface expression of IgE and IgG1. It also regulates the expression of the low affinity Fc receptor for IgE (CD23) on both lymphocytes and monocytes. Positively regulates IL31RA expression in macrophages. Stimulates autophagy in dendritic cells by interfering with mTORC1 signaling and through the induction of RUFY4. This Tursiops truncatus (Atlantic bottle-nosed dolphin) protein is Interleukin-4 (IL4).